The chain runs to 325 residues: TNFAIP3-interacting protein 3 (325 aa).

Disordered stretches follow at residues 1–30 (MAHFVQGTSRMIAAESSTEHKECAEPSTRK) and 84–129 (RFLS…RLNE). A compositionally biased stretch (basic and acidic residues) spans 17–28 (STEHKECAEPST). Residues 27–265 (STRKNLMNSL…LEKQLKQMYC (239 aa)) adopt a coiled-coil conformation. The ubiquitin-binding domain (UBD) stretch occupies residues 190 to 248 (HEEMRTEMEVLKQQVQIYEEDFKKERSDRERLNQEKEELQQINETSQSQLNRLNSQIKA).

As to quaternary structure, interacts with TNFAIP3. Interacts with polyubiquitin. Highly expressed in lung, lymph node, thymus and fetal liver. Expressed at lower levels in bone marrow, brain, kidney, spleen, leukocytes and tonsils. Could be detected in heart, salivary gland, adrenal gland, pancreas, ovary and fetal brain. High levels detected in liver, colon, small intestine, muscle, stomach, testis, placenta, thyroid, uterus, prostate, skin and PBL.

Its function is as follows. Binds to zinc finger protein TNFAIP3 and inhibits NF-kappa-B activation induced by tumor necrosis factor, Toll-like receptor 4 (TLR4), interleukin-1 and 12-O-tetradecanoylphorbol-13-acetate. Overexpression inhibits NF-kappa-B-dependent gene expression in response to lipopolysaccharide at a level downstream of TRAF6 and upstream of IKBKB. NF-kappa-B inhibition is independent of TNFAIP3 binding. This chain is TNFAIP3-interacting protein 3, found in Homo sapiens (Human).